The chain runs to 116 residues: Protein Wnt-5a (116 aa).

Residue serine 1 is the site of O-palmitoleoyl serine; by PORCN attachment. 2 N-linked (GlcNAc...) asparagine glycosylation sites follow: asparagine 69 and asparagine 83. An intrachain disulfide couples cysteine 82 to cysteine 97.

This sequence belongs to the Wnt family. Post-translationally, palmitoleoylation is required for efficient binding to frizzled receptors. Depalmitoleoylation leads to Wnt signaling pathway inhibition.

Its subcellular location is the secreted. The protein resides in the extracellular space. It is found in the extracellular matrix. In terms of biological role, ligand for members of the frizzled family of seven transmembrane receptors. Can activate or inhibit canonical Wnt signaling, depending on receptor context. Required during embryogenesis for extension of the primary anterior-posterior axis. In Meleagris gallopavo (Wild turkey), this protein is Protein Wnt-5a (WNT5A).